A 706-amino-acid polypeptide reads, in one-letter code: Polyribonucleotide nucleotidyltransferase (706 aa).

Mg(2+) contacts are provided by Asp-486 and Asp-492. Positions 553–612 constitute a KH domain; the sequence is PRIHTIKISTDKIKDVIGKGGSVIRALTEETGTTIEIEDDGTVKIASTDGEKAKHAIRRI. One can recognise an S1 motif domain in the interval 622–690; the sequence is GRVYQGKVTR…RQGRVRLSIK (69 aa).

It belongs to the polyribonucleotide nucleotidyltransferase family. As to quaternary structure, component of the RNA degradosome, which is a multiprotein complex involved in RNA processing and mRNA degradation. Requires Mg(2+) as cofactor.

It is found in the cytoplasm. The catalysed reaction is RNA(n+1) + phosphate = RNA(n) + a ribonucleoside 5'-diphosphate. Functionally, involved in mRNA degradation. Catalyzes the phosphorolysis of single-stranded polyribonucleotides processively in the 3'- to 5'-direction. This chain is Polyribonucleotide nucleotidyltransferase, found in Pectobacterium carotovorum subsp. carotovorum (strain PC1).